Consider the following 183-residue polypeptide: Troponin I, fast skeletal muscle (183 aa).

S2 is modified (N-acetylserine). Residues 2-48 (SDEEKKRRAATARRQHLKSAMLQLAVTEIEKEAAAKEVEKQNYLAEH) form an involved in binding TNC region. The interval 97–117 (SQKLFDLRGKFKRPPLRRVRM) is involved in binding TNC and actin.

Belongs to the troponin I family. In terms of assembly, binds to actin and tropomyosin. The N-terminus is blocked.

Its function is as follows. Troponin I is the inhibitory subunit of troponin, the thin filament regulatory complex which confers calcium-sensitivity to striated muscle actomyosin ATPase activity. This is Troponin I, fast skeletal muscle (TNNI2) from Gallus gallus (Chicken).